A 190-amino-acid polypeptide reads, in one-letter code: MNPQIRNPMKAMYPGTFYFQFKNLWEANDRNETWLCFTVEGIKRRSVVSWKTGVFRNQVDSETHCHAERCFLSWFCDDILSPNTNYQVTWYTSWSPCPECAGEVAEFLARHSNVNLTIFTARLYYFQDTDYQEGLRSLSQEGVAVKIMDYKDFKYCWENFVYNDDEPFKPWKGLKYNFRFLKRRLQEILE.

A CMP/dCMP-type deaminase domain is found at 29–138 (DRNETWLCFT…TDYQEGLRSL (110 aa)). 3 residues coordinate Zn(2+): histidine 66, cysteine 97, and cysteine 100.

This sequence belongs to the cytidine and deoxycytidylate deaminase family. As to quaternary structure, homodimer. Interacts with TRIB3. The cofactor is Zn(2+).

The protein localises to the nucleus. It localises to the cytoplasm. It catalyses the reaction a 2'-deoxycytidine in single-stranded DNA + H2O + H(+) = a 2'-deoxyuridine in single-stranded DNA + NH4(+). Functionally, DNA deaminase (cytidine deaminase) which acts as an inhibitor of retrovirus replication and retrotransposon mobility via deaminase-dependent and -independent mechanisms. May also play a role in the epigenetic regulation of gene expression through the process of active DNA demethylation. The protein is DNA dC-&gt;dU-editing enzyme APOBEC-3C (APOBEC3C) of Gorilla gorilla gorilla (Western lowland gorilla).